Reading from the N-terminus, the 264-residue chain is Phosphoinositide-3-kinase-interacting protein 1 (264 aa).

Positions 1–21 (MLLAWVHTFLLSNMLLAEAYG) are cleaved as a signal peptide. The Extracellular portion of the chain corresponds to 22-170 (SGGCFWDNGH…SKEKKDLGTL (149 aa)). A Kringle domain is found at 24 to 101 (GCFWDNGHLY…EKRPCEDVSC (78 aa)). 3 disulfides stabilise this stretch: Cys25-Cys101, Cys46-Cys82, and Cys70-Cys96. The segment at 94-129 (RPCEDVSCPETTSQAPPPSSAMELEEKSGAPGDKEA) is disordered. Residues 117-129 (LEEKSGAPGDKEA) are compositionally biased toward basic and acidic residues. Residues 171-191 (GYVLGITMMVIILAIGAGIIV) traverse the membrane as a helical segment. Residues 192-264 (GYTYKRGKDL…LTGQAGTPGA (73 aa)) are Cytoplasmic-facing.

Its subcellular location is the cell membrane. In terms of biological role, negative regulator of hepatic phosphatidylinositol 3-kinase (PI3K) activity. The chain is Phosphoinositide-3-kinase-interacting protein 1 (Pik3ip1) from Mus musculus (Mouse).